Reading from the N-terminus, the 395-residue chain is Guanine nucleotide-binding protein subunit beta-5 (395 aa).

WD repeat units follow at residues Gly-103–Ala-142, Met-145–Met-184, Met-193–His-234, His-236–Glu-278, Thr-279–Ile-318, Ser-320–Ile-362, and Gly-365–Trp-394.

Belongs to the WD repeat G protein beta family. Component of a complex composed of RGS9 (isoform RGS9-1), GNB5 and RGS9BP; within this complex, the presence of GNB5 stabilizes both itself and RGS9 and increases RGS9 GTPase-activating protein (GAP) activity. Interacts with RGS7, forming the RGS7-GNB5 complex; within this complex, the presence of GNB5 increases RGS7 GTPase-activating protein (GAP) activity. Interacts with GPR158; promotes the GTPase activator activity of the RGS7-GNB5 complex in absence of glycine, in contrast GTPase activator activity of the RGS7-GNB5 complex is inhibited in presence of glycine. Interacts with RGS6. Isoform 1 is only detected in retina. Isoform 2 is detected in brain (at protein level). Isoform 2 is detected in brain.

The protein localises to the membrane. Functionally, enhances GTPase-activating protein (GAP) activity of regulator of G protein signaling (RGS) proteins, such as RGS7 and RGS9, hence involved in the termination of the signaling initiated by the G protein coupled receptors (GPCRs) by accelerating the GTP hydrolysis on the G-alpha subunits, thereby promoting their inactivation. Increases RGS7 GTPase-activating protein (GAP) activity, thereby regulating mood and cognition. Increases RGS9 GTPase-activating protein (GAP) activity, hence contributes to the deactivation of G protein signaling initiated by D(2) dopamine receptors. May play an important role in neuronal signaling, including in the parasympathetic, but not sympathetic, control of heart rate. This Mus musculus (Mouse) protein is Guanine nucleotide-binding protein subunit beta-5 (Gnb5).